The chain runs to 242 residues: Biosynthetic peptidoglycan transglycosylase (242 aa).

The helical transmembrane segment at 19–39 (ILAALAVFWGGGIALFSVVPV) threads the bilayer.

It belongs to the glycosyltransferase 51 family.

The protein localises to the cell inner membrane. The enzyme catalyses [GlcNAc-(1-&gt;4)-Mur2Ac(oyl-L-Ala-gamma-D-Glu-L-Lys-D-Ala-D-Ala)](n)-di-trans,octa-cis-undecaprenyl diphosphate + beta-D-GlcNAc-(1-&gt;4)-Mur2Ac(oyl-L-Ala-gamma-D-Glu-L-Lys-D-Ala-D-Ala)-di-trans,octa-cis-undecaprenyl diphosphate = [GlcNAc-(1-&gt;4)-Mur2Ac(oyl-L-Ala-gamma-D-Glu-L-Lys-D-Ala-D-Ala)](n+1)-di-trans,octa-cis-undecaprenyl diphosphate + di-trans,octa-cis-undecaprenyl diphosphate + H(+). It participates in cell wall biogenesis; peptidoglycan biosynthesis. Functionally, peptidoglycan polymerase that catalyzes glycan chain elongation from lipid-linked precursors. This chain is Biosynthetic peptidoglycan transglycosylase, found in Salmonella schwarzengrund (strain CVM19633).